The following is a 228-amino-acid chain: Protein 33K (228 aa).

The disordered stretch occupies residues 1-156 (MAPKKKLQLP…GALRLAPNEP (156 aa)). Residues 15–53 (TDEEEYWDSQAEEVLDEEEEMMEDWDSLDEASEAEEVSD) are compositionally biased toward acidic residues. 2 stretches are compositionally biased toward low complexity: residues 54 to 63 (ETPSPSVAFP) and 104 to 119 (AAPT…ATAA). Residues 171–198 (YAIFQQSRGQEQELKIKNRSLRSLTRSC) are necessary for nuclear subcellular location. Residues 177-197 (SRGQEQELKIKNRSLRSLTRS) are RS-repeat; required for splicing enhancer activity.

This sequence belongs to the adenoviridae splicing factor family. As to quaternary structure, homooligomer. Interacts with DBP; this interaction occurs at a unique vertex during genome packaging. Interacts with IVa2; this interaction occurs at a unique vertex during genome packaging and seems to potentiate IVa2 and 33K oligomerization. Phosphorylated in vitro by human PKA and PRKDC. PRKDC inhibits, whereas PKA activates the splicing factor.

The protein localises to the host nucleus. Promotes alternative splicing of late transcripts by promoting splicing at weak 3' splice sites. Required for the temporal activation of major late pre-mRNA splicing at late times of infection. Induces the splicing and expression of the late capsid vertex protein. Its function is as follows. Probably functions as the small terminase that is part of the molecular motor that translocates genomic DNA in empty capsid during DNA packaging. This motor is located at a unique vertex and comprises at least the IVa2 ATPase, the small terminase 33K and probably a portal. Forms a ring-like structure of about 17 nm in which genomic DNA is translocated into the capsid. Stimulates IVa2 ATPase activity in the presence of the viral genome. Once the DNA is packaged, the terminase detaches: the 33K protein is present in the empty particles, but not in the mature virions. Also involved in virion assembly. In Homo sapiens (Human), this protein is Protein 33K.